Reading from the N-terminus, the 285-residue chain is UPF0014 membrane protein STAR2 (285 aa).

The next 7 membrane-spanning stretches (helical) occupy residues 30 to 50 (FLVGMLKPVAATAVVAMAVAL), 64 to 84 (YAMARAFLQLSVIGFVLQFIF), 88 to 108 (SAAWILLAYLFMVTVAGYTAG), 119 to 139 (HIAAVSILAGTSVTMALLVAL), 148 to 168 (YIIPVAGMMVGNAMTVTGVTM), 203 to 225 (SLVIALSPVIDNAKTVGLIALPG), and 240 to 262 (AIQLQIVVMNMLMGASTVSSILS).

It belongs to the UPF0014 family. In terms of assembly, interacts with STAR2. Expressed in roots.

Its subcellular location is the membrane. Its function is as follows. Associates with STAR2 to form a functional transmembrane ABC transporter required for detoxification of aluminum (Al) in roots. Can specifically transport UDP-glucose. This chain is UPF0014 membrane protein STAR2, found in Oryza sativa subsp. japonica (Rice).